The following is a 241-amino-acid chain: tRNA (guanine-N(1)-)-methyltransferase (241 aa).

S-adenosyl-L-methionine is bound by residues G112 and L131–L136.

This sequence belongs to the RNA methyltransferase TrmD family. In terms of assembly, homodimer.

It localises to the cytoplasm. The enzyme catalyses guanosine(37) in tRNA + S-adenosyl-L-methionine = N(1)-methylguanosine(37) in tRNA + S-adenosyl-L-homocysteine + H(+). Functionally, specifically methylates guanosine-37 in various tRNAs. The protein is tRNA (guanine-N(1)-)-methyltransferase of Clostridium novyi (strain NT).